The primary structure comprises 736 residues: Na(+)/H(+) antiporter NhaA (736 aa).

Residues 1–387 (MNHSPQSARP…ICGYLLLRAA (387 aa)) form a na(+)/H(+) antiporter NhaA region. 12 consecutive transmembrane segments (helical) span residues 23–43 (AGGI…NSPF), 58–78 (LSLA…LVGL), 96–116 (MLPG…FAVL), 126–146 (GWAV…SLLG), 155–175 (VFLA…IAIF), 178–198 (AEIS…LFVM), 201–221 (MGVV…FFVF), 224–244 (GVHA…KPAP), 265–285 (VAFI…FKGL), 298–318 (ILLG…WLAI), 334–354 (LYGV…IGLL), and 367–387 (IGVL…LRAA). Residues 388 to 736 (RPDQSAANPL…EKAIWARYGL (349 aa)) form a peptidase S49 region.

In the N-terminal section; belongs to the NhaA Na(+)/H(+) (TC 2.A.33) antiporter family. The protein in the C-terminal section; belongs to the peptidase S49 family.

The protein resides in the cell inner membrane. It carries out the reaction Na(+)(in) + 2 H(+)(out) = Na(+)(out) + 2 H(+)(in). Na(+)/H(+) antiporter that extrudes sodium in exchange for external protons. In Brucella abortus (strain 2308), this protein is Na(+)/H(+) antiporter NhaA.